The chain runs to 299 residues: Bifunctional protein FolD (299 aa).

Residues 168-170 (GRS), Ser193, and Ile234 each bind NADP(+).

The protein belongs to the tetrahydrofolate dehydrogenase/cyclohydrolase family. In terms of assembly, homodimer.

It catalyses the reaction (6R)-5,10-methylene-5,6,7,8-tetrahydrofolate + NADP(+) = (6R)-5,10-methenyltetrahydrofolate + NADPH. It carries out the reaction (6R)-5,10-methenyltetrahydrofolate + H2O = (6R)-10-formyltetrahydrofolate + H(+). It participates in one-carbon metabolism; tetrahydrofolate interconversion. Functionally, catalyzes the oxidation of 5,10-methylenetetrahydrofolate to 5,10-methenyltetrahydrofolate and then the hydrolysis of 5,10-methenyltetrahydrofolate to 10-formyltetrahydrofolate. The polypeptide is Bifunctional protein FolD (Bartonella tribocorum (strain CIP 105476 / IBS 506)).